The sequence spans 1076 residues: Structural maintenance of chromosomes protein 5 (1076 aa).

Gly-49 to Ser-56 is an ATP binding site. A coiled-coil region spans residues Ser-190–Leu-415. Residues Glu-375–Glu-410 show a composition bias toward basic and acidic residues. Positions Glu-375–Arg-420 are disordered. The segment at Asn-416 to Lys-617 is flexible hinge. 2 coiled-coil regions span residues Asn-627–Ala-713 and Lys-749–His-786.

It belongs to the SMC family. SMC5 subfamily. Interacts with smc-6. In terms of tissue distribution, expressed in the germline (at protein level).

It localises to the nucleus. The protein resides in the chromosome. Core component of the smc-5/smc-6 complex. Functions in DNA double strand break repair by promoting sister-chromatid homologous recombination during meiosis. Acts in a DNA repair pathway for removal of ionizing radiation- and ultraviolet (UV) radiation-induced DNA lesions that is distinct from classical nucleotide excision repair and the translesion synthesis pathway. Also involved in the recovery of stalled replication forks. The sequence is that of Structural maintenance of chromosomes protein 5 from Caenorhabditis elegans.